The chain runs to 299 residues: MAAITAGMVAELRGKTDAPMMECKKALTEADGDMAKAEEILRVKLGNKASKAAVRIAAEGIVAVSISADGKLGSIIEVNSETDFVAKNDEFIALSNGCAALVANQNPADVAALSALPMGEGTVESTRSALVGKIGENMTIRRFVRFEAKGKLVSYIHGGAKVGVVVDLVGGDEQLGKDLAMHIAASKPKSLDSTGVPAELLETERRVAIEKAREAGKPEAMLEKIAEGTVQKYLKDVTLLGQVFVKAADGKQTIEQLLKEKGASVAGFTLYMVGEGIEKKVDDFAAEVAAQAAAAAAKK.

An involved in Mg(2+) ion dislocation from EF-Tu region spans residues 82-85; sequence TDFV.

The protein belongs to the EF-Ts family.

The protein resides in the cytoplasm. Functionally, associates with the EF-Tu.GDP complex and induces the exchange of GDP to GTP. It remains bound to the aminoacyl-tRNA.EF-Tu.GTP complex up to the GTP hydrolysis stage on the ribosome. The protein is Elongation factor Ts of Dechloromonas aromatica (strain RCB).